The sequence spans 549 residues: Chaperonin GroEL (549 aa).

ATP contacts are provided by residues 29–32 (TAGP), Lys-50, 86–90 (DGTTT), Gly-418, and Asp-499.

The protein belongs to the chaperonin (HSP60) family. As to quaternary structure, forms a cylinder of 14 subunits composed of two heptameric rings stacked back-to-back. Interacts with the co-chaperonin GroES.

The protein resides in the cytoplasm. The enzyme catalyses ATP + H2O + a folded polypeptide = ADP + phosphate + an unfolded polypeptide.. Together with its co-chaperonin GroES, plays an essential role in assisting protein folding. The GroEL-GroES system forms a nano-cage that allows encapsulation of the non-native substrate proteins and provides a physical environment optimized to promote and accelerate protein folding. The polypeptide is Chaperonin GroEL (Wolbachia sp. subsp. Drosophila simulans (strain wRi)).